Reading from the N-terminus, the 427-residue chain is 3-phosphoshikimate 1-carboxyvinyltransferase (427 aa).

3-phosphoshikimate is bound by residues Lys-22, Ser-23, and Arg-27. Lys-22 serves as a coordination point for phosphoenolpyruvate. Gly-96 and Arg-124 together coordinate phosphoenolpyruvate. Residues Ser-169, Ser-170, Gln-171, Ser-197, Asp-313, Asn-336, and Lys-340 each contribute to the 3-phosphoshikimate site. Position 171 (Gln-171) interacts with phosphoenolpyruvate. The active-site Proton acceptor is the Asp-313. Arg-344, Arg-386, and Lys-411 together coordinate phosphoenolpyruvate.

Belongs to the EPSP synthase family. As to quaternary structure, monomer.

The protein localises to the cytoplasm. It carries out the reaction 3-phosphoshikimate + phosphoenolpyruvate = 5-O-(1-carboxyvinyl)-3-phosphoshikimate + phosphate. The protein operates within metabolic intermediate biosynthesis; chorismate biosynthesis; chorismate from D-erythrose 4-phosphate and phosphoenolpyruvate: step 6/7. In terms of biological role, catalyzes the transfer of the enolpyruvyl moiety of phosphoenolpyruvate (PEP) to the 5-hydroxyl of shikimate-3-phosphate (S3P) to produce enolpyruvyl shikimate-3-phosphate and inorganic phosphate. This is 3-phosphoshikimate 1-carboxyvinyltransferase from Shigella flexneri serotype 5b (strain 8401).